A 265-amino-acid chain; its full sequence is 2-C-methyl-D-erythritol 4-phosphate cytidylyltransferase (265 aa).

The segment covering 231 to 241 (DRGGASREAER) has biased composition (basic and acidic residues). Residues 231-265 (DRGGASREAERSAMPSAATSVFSGARSAASGSEEV) are disordered. Low complexity predominate over residues 253–265 (SGARSAASGSEEV).

The protein belongs to the IspD/TarI cytidylyltransferase family. IspD subfamily.

It carries out the reaction 2-C-methyl-D-erythritol 4-phosphate + CTP + H(+) = 4-CDP-2-C-methyl-D-erythritol + diphosphate. It participates in isoprenoid biosynthesis; isopentenyl diphosphate biosynthesis via DXP pathway; isopentenyl diphosphate from 1-deoxy-D-xylulose 5-phosphate: step 2/6. Functionally, catalyzes the formation of 4-diphosphocytidyl-2-C-methyl-D-erythritol from CTP and 2-C-methyl-D-erythritol 4-phosphate (MEP). This Xanthomonas campestris pv. campestris (strain B100) protein is 2-C-methyl-D-erythritol 4-phosphate cytidylyltransferase.